The sequence spans 546 residues: Inosine-5'-monophosphate dehydrogenase (546 aa).

CBS domains follow at residues 135 to 197 (FILD…VTAI) and 198 to 254 (MSTD…PLAS). NAD(+) contacts are provided by residues 292–294 (DSS) and 342–344 (GMG). Positions 344 and 346 each coordinate K(+). Serine 347 lines the IMP pocket. Cysteine 349 contributes to the K(+) binding site. The active-site Thioimidate intermediate is cysteine 349. Residues 382–384 (DGG), 405–406 (GG), and 430–434 (YRGMG) each bind IMP. The Proton acceptor role is filled by arginine 460. Glutamine 472 contacts IMP. K(+)-binding residues include glutamate 531 and glycine 532.

This sequence belongs to the IMPDH/GMPR family. As to quaternary structure, homotetramer. K(+) is required as a cofactor.

Its subcellular location is the cytoplasm. It catalyses the reaction IMP + NAD(+) + H2O = XMP + NADH + H(+). It participates in purine metabolism; XMP biosynthesis via de novo pathway; XMP from IMP: step 1/1. With respect to regulation, mycophenolic acid (MPA) is a non-competitive inhibitor that prevents formation of the closed enzyme conformation by binding to the same site as the amobile flap. In contrast, mizoribine monophosphate (MZP) is a competitive inhibitor that induces the closed conformation. MPA is a potent inhibitor of mammalian IMPDHs but a poor inhibitor of the bacterial enzymes. MZP is a more potent inhibitor of bacterial IMPDH. Catalyzes the conversion of inosine 5'-phosphate (IMP) to xanthosine 5'-phosphate (XMP), the first committed and rate-limiting step in the de novo synthesis of guanine nucleotides, and therefore plays an important role in the regulation of cell growth. The sequence is that of Inosine-5'-monophosphate dehydrogenase from Aspergillus fumigatus (strain ATCC MYA-4609 / CBS 101355 / FGSC A1100 / Af293) (Neosartorya fumigata).